A 551-amino-acid chain; its full sequence is Glutamate--tRNA ligase (551 aa).

Positions Pro-100–Ser-110 match the 'HIGH' region motif.

It belongs to the class-I aminoacyl-tRNA synthetase family. Glutamate--tRNA ligase type 2 subfamily.

It is found in the cytoplasm. It carries out the reaction tRNA(Glu) + L-glutamate + ATP = L-glutamyl-tRNA(Glu) + AMP + diphosphate. Catalyzes the attachment of glutamate to tRNA(Glu) in a two-step reaction: glutamate is first activated by ATP to form Glu-AMP and then transferred to the acceptor end of tRNA(Glu). The polypeptide is Glutamate--tRNA ligase (Archaeoglobus fulgidus (strain ATCC 49558 / DSM 4304 / JCM 9628 / NBRC 100126 / VC-16)).